Consider the following 131-residue polypeptide: Small ribosomal subunit protein uS8 (131 aa).

The protein belongs to the universal ribosomal protein uS8 family. In terms of assembly, part of the 30S ribosomal subunit. Contacts proteins S5 and S12.

One of the primary rRNA binding proteins, it binds directly to 16S rRNA central domain where it helps coordinate assembly of the platform of the 30S subunit. This chain is Small ribosomal subunit protein uS8, found in Halorhodospira halophila (strain DSM 244 / SL1) (Ectothiorhodospira halophila (strain DSM 244 / SL1)).